Reading from the N-terminus, the 216-residue chain is Uracil phosphoribosyltransferase (216 aa).

Residues arginine 85, arginine 110, and 135–143 (DPMVATGYS) each bind 5-phospho-alpha-D-ribose 1-diphosphate. Uracil-binding positions include isoleucine 200 and 205–207 (GDA). Aspartate 206 serves as a coordination point for 5-phospho-alpha-D-ribose 1-diphosphate.

This sequence belongs to the UPRTase family. It depends on Mg(2+) as a cofactor.

It catalyses the reaction UMP + diphosphate = 5-phospho-alpha-D-ribose 1-diphosphate + uracil. Its pathway is pyrimidine metabolism; UMP biosynthesis via salvage pathway; UMP from uracil: step 1/1. Its activity is regulated as follows. Allosterically activated by GTP. Its function is as follows. Catalyzes the conversion of uracil and 5-phospho-alpha-D-ribose 1-diphosphate (PRPP) to UMP and diphosphate. The polypeptide is Uracil phosphoribosyltransferase (Burkholderia ambifaria (strain ATCC BAA-244 / DSM 16087 / CCUG 44356 / LMG 19182 / AMMD) (Burkholderia cepacia (strain AMMD))).